The sequence spans 863 residues: FO synthase (863 aa).

Radical SAM core domains lie at 91 to 343 (ITYS…APPN) and 551 to 792 (VTFV…SHIQ). Positions 92–424 (TYSRKVFIPV…PRVRGHVVAL (333 aa)) are cofG-like. Residues Cys105, Cys109, Cys112, Cys565, Cys569, and Cys572 each coordinate [4Fe-4S] cluster. The segment at 528–861 (DGPALEAVTA…RQRTTTYALR (334 aa)) is cofH-like.

This sequence in the N-terminal section; belongs to the radical SAM superfamily. CofG family. It in the C-terminal section; belongs to the radical SAM superfamily. CofH family. [4Fe-4S] cluster serves as cofactor.

It catalyses the reaction 5-amino-6-(D-ribitylamino)uracil + L-tyrosine + S-adenosyl-L-methionine = 5-amino-5-(4-hydroxybenzyl)-6-(D-ribitylimino)-5,6-dihydrouracil + 2-iminoacetate + 5'-deoxyadenosine + L-methionine + H(+). It carries out the reaction 5-amino-5-(4-hydroxybenzyl)-6-(D-ribitylimino)-5,6-dihydrouracil + S-adenosyl-L-methionine = 7,8-didemethyl-8-hydroxy-5-deazariboflavin + 5'-deoxyadenosine + L-methionine + NH4(+) + H(+). It participates in cofactor biosynthesis; coenzyme F0 biosynthesis. Its function is as follows. Catalyzes the radical-mediated synthesis of 7,8-didemethyl-8-hydroxy-5-deazariboflavin (FO) from 5-amino-6-(D-ribitylamino)uracil and L-tyrosine. In Mycobacterium leprae (strain TN), this protein is FO synthase (fbiC).